Reading from the N-terminus, the 34-residue chain is Conotoxin S4.3 (34 aa).

Position 1 is a pyrrolidone carboxylic acid (glutamine 1). Glutamate 3 is modified (4-carboxyglutamate). The O-linked (HexNAc...) serine glycan is linked to serine 7. Threonine 9 is a glycosylation site (O-linked (HexNAc...) threonine). 4-hydroxyproline occurs at positions 17, 22, 31, and 32.

This sequence belongs to the conotoxin A superfamily. Contains 3 disulfide bonds. As to expression, expressed by the venom duct.

The protein resides in the secreted. In terms of biological role, probable neurotoxin with ion channel inhibitor activity. The polypeptide is Conotoxin S4.3 (Conus striatus (Striated cone)).